Here is a 100-residue protein sequence, read N- to C-terminus: Integration host factor subunit beta (100 aa).

A disordered region spans residues Lys81–Thr100. Basic and acidic residues predominate over residues Pro82 to Thr100.

Belongs to the bacterial histone-like protein family. As to quaternary structure, heterodimer of an alpha and a beta chain.

This protein is one of the two subunits of integration host factor, a specific DNA-binding protein that functions in genetic recombination as well as in transcriptional and translational control. The protein is Integration host factor subunit beta (ihfB) of Pseudomonas putida (Arthrobacter siderocapsulatus).